We begin with the raw amino-acid sequence, 329 residues long: N-acetyl-gamma-glutamyl-phosphate reductase (329 aa).

Cys-155 is an active-site residue.

It belongs to the NAGSA dehydrogenase family. Type 1 subfamily.

It is found in the cytoplasm. The catalysed reaction is N-acetyl-L-glutamate 5-semialdehyde + phosphate + NADP(+) = N-acetyl-L-glutamyl 5-phosphate + NADPH + H(+). It functions in the pathway amino-acid biosynthesis; L-arginine biosynthesis; N(2)-acetyl-L-ornithine from L-glutamate: step 3/4. Its function is as follows. Catalyzes the NADPH-dependent reduction of N-acetyl-5-glutamyl phosphate to yield N-acetyl-L-glutamate 5-semialdehyde. This chain is N-acetyl-gamma-glutamyl-phosphate reductase, found in Shewanella pealeana (strain ATCC 700345 / ANG-SQ1).